A 584-amino-acid chain; its full sequence is Ubiquitin-like-specific protease 1D (584 aa).

2 disordered regions span residues 28 to 64 and 99 to 323; these read DKEDEVPELEIVNTTKPTPPPPPTFFSDDQTDSPKLL and DLEE…QAAE. The segment covering 99 to 120 has biased composition (basic and acidic residues); sequence DLEEEKQRRVLEGSKMEVDRSS. The span at 121-132 shows a compositional bias: low complexity; that stretch reads KVVSSTSSGSDV. Basic and acidic residues-rich tracts occupy residues 142–165 and 176–196; these read DTSRGNADSKDTSRQGNADSKEVS and PKTDSQSKKAFGKELEDLGCE. The segment covering 197-207 has biased composition (basic residues); that stretch reads RRKHKAGRKPV. Positions 221–253 are enriched in basic and acidic residues; it reads GKAEHSAKQFDSGLKESKGNKKSKEPYGKKRPM. Residues 261–274 show a composition bias toward acidic residues; it reads IDDDDDDDDDDDND. Positions 275–286 are enriched in basic and acidic residues; the sequence is TSGHETPREWSW. Residues His-438, Asp-461, and Cys-525 contribute to the active site.

Belongs to the peptidase C48 family.

The protein localises to the nucleus speckle. Protease that catalyzes two essential functions in the SUMO pathway: processing of full-length SUMOs to their mature forms and deconjugation of SUMO from targeted proteins. Cleaves precursors of SUM1 and SUM2, but not of SUM3 or SUM5. Able to release SUM1 and SUM2 from conjugates, but unable to cleave SUM3. Protease activity mainly directed at deconjugating SUM1 and SUM2 from their target proteins. Regulates salt stress responses and flowering time. Redundant with ULP1C. The protein is Ubiquitin-like-specific protease 1D (ULP1D) of Arabidopsis thaliana (Mouse-ear cress).